Consider the following 466-residue polypeptide: ATP synthase subunit beta (466 aa).

ATP is bound at residue 148 to 155 (GGAGVGKT).

The protein belongs to the ATPase alpha/beta chains family. As to quaternary structure, F-type ATPases have 2 components, CF(1) - the catalytic core - and CF(0) - the membrane proton channel. CF(1) has five subunits: alpha(3), beta(3), gamma(1), delta(1), epsilon(1). CF(0) has three main subunits: a(1), b(2) and c(9-12). The alpha and beta chains form an alternating ring which encloses part of the gamma chain. CF(1) is attached to CF(0) by a central stalk formed by the gamma and epsilon chains, while a peripheral stalk is formed by the delta and b chains.

The protein localises to the cell inner membrane. The catalysed reaction is ATP + H2O + 4 H(+)(in) = ADP + phosphate + 5 H(+)(out). Functionally, produces ATP from ADP in the presence of a proton gradient across the membrane. The catalytic sites are hosted primarily by the beta subunits. This chain is ATP synthase subunit beta, found in Xylella fastidiosa (strain M23).